Reading from the N-terminus, the 509-residue chain is GMP synthase [glutamine-hydrolyzing] (509 aa).

Positions 4–194 constitute a Glutamine amidotransferase type-1 domain; sequence KVIVLDFGGQ…LYEICGLTPD (191 aa). Cysteine 81 (nucleophile) is an active-site residue. Residues histidine 168 and glutamate 170 contribute to the active site. In terms of domain architecture, GMPS ATP-PPase spans 195–384; it reads WTMESFAQKA…LGLPESIVWR (190 aa). 222 to 228 is a binding site for ATP; it reads SGGVDSS.

Homodimer.

The catalysed reaction is XMP + L-glutamine + ATP + H2O = GMP + L-glutamate + AMP + diphosphate + 2 H(+). It participates in purine metabolism; GMP biosynthesis; GMP from XMP (L-Gln route): step 1/1. In terms of biological role, catalyzes the synthesis of GMP from XMP. The sequence is that of GMP synthase [glutamine-hydrolyzing] from Carboxydothermus hydrogenoformans (strain ATCC BAA-161 / DSM 6008 / Z-2901).